Consider the following 391-residue polypeptide: MSIVRMTDLDLSGKRVLIRQDLNVPIDNGQITSEQRITASVPTIKLALEKGAAVMVTSHLGRPKEGTWSEEDSLAPVAARLTTLLGLDVPLVRDWVDGVDVAPGQVVLLENCRMNVGEGKDDEALARKYAALCDVFVMDAFGTAHRAQASTHGVIRFAPVAAGGPLLMAELDALAKALDNPAKPLLAIVAGSKVSTKLELLSNLVNKVDQLIVGGGIANTFIAAAGHDVGKSLSEPDLIPTANQIVADAKARGAEIPLPTDVVVAKQFLPDAEASVKSLDQVDADDLILDIGPQTAAHYAELIANAGTVVWNGPVGVFEFEPFSHGTETLARAIAASKAFSIAGGGDTLAAVDKYAIAKDVTYISTGGGAFLEFLEGKTLPAVAALEARGQ.

Substrate-binding positions include 21–23, Arg-36, 59–62, Arg-113, and Arg-146; these read DLN and HLGR. ATP-binding positions include Lys-197, Glu-319, and 345–348; that span reads GGDT.

The protein belongs to the phosphoglycerate kinase family. Monomer.

It localises to the cytoplasm. The enzyme catalyses (2R)-3-phosphoglycerate + ATP = (2R)-3-phospho-glyceroyl phosphate + ADP. The protein operates within carbohydrate degradation; glycolysis; pyruvate from D-glyceraldehyde 3-phosphate: step 2/5. The sequence is that of Phosphoglycerate kinase from Xanthomonas campestris pv. campestris (strain 8004).